Consider the following 466-residue polypeptide: Fumarate hydratase class II (466 aa).

Residues 99–101 (SGT), 129–132 (HPND), 139–141 (SSN), and Thr-187 contribute to the substrate site. His-188 functions as the Proton donor/acceptor in the catalytic mechanism. The active site involves Ser-318. Substrate-binding positions include Ser-319 and 324 to 326 (KVN).

The protein belongs to the class-II fumarase/aspartase family. Fumarase subfamily. Homotetramer.

It localises to the cytoplasm. It carries out the reaction (S)-malate = fumarate + H2O. It functions in the pathway carbohydrate metabolism; tricarboxylic acid cycle; (S)-malate from fumarate: step 1/1. Functionally, involved in the TCA cycle. Catalyzes the stereospecific interconversion of fumarate to L-malate. This is Fumarate hydratase class II from Thermus thermophilus (strain ATCC BAA-163 / DSM 7039 / HB27).